The sequence spans 233 residues: Putative N-acetylmannosamine-6-phosphate 2-epimerase (233 aa).

This sequence belongs to the NanE family.

It carries out the reaction an N-acyl-D-glucosamine 6-phosphate = an N-acyl-D-mannosamine 6-phosphate. The protein operates within amino-sugar metabolism; N-acetylneuraminate degradation; D-fructose 6-phosphate from N-acetylneuraminate: step 3/5. Converts N-acetylmannosamine-6-phosphate (ManNAc-6-P) to N-acetylglucosamine-6-phosphate (GlcNAc-6-P). This Yersinia pseudotuberculosis serotype O:1b (strain IP 31758) protein is Putative N-acetylmannosamine-6-phosphate 2-epimerase.